The following is a 300-amino-acid chain: MEPPMEQSGGEQEPGAVRLLDLPWEDVLLPHVLNWVPLRQLLRLQRVSRAFRALVQLHLARLRRFDAAQVGPQIPRAALVRLLRDAEGLQELALAPCHEWLLDEDLVPVLARNPQLRSVALAGCGQLSRRALGALAEGCPRLQRISLAHCDWVDGLALRGLADRCPALEELDLTACRQLKDEAIVYLAQRRGAGLRSLSLAVNANVGDTAVQELARNCPQLEHLDLTGCLRVGSDGVRTLAEYCPALRSLRVRHCHHVAEPSLSRLRKRGVDIDVEPPLHQALVLLQDMAGFAPFVNLQV.

Position 1 is an N-acetylmethionine (methionine 1). The region spanning 19–66 is the F-box domain; it reads LLDLPWEDVLLPHVLNWVPLRQLLRLQRVSRAFRALVQLHLARLRRFD. The interval 113 to 269 is interaction with SMURF1; it reads NPQLRSVALA…EPSLSRLRKR (157 aa). 5 LRR repeats span residues 141–162, 167–188, 194–215, 220–241, and 246–267; these read RLQR…RGLA, ALEE…VYLA, GLRS…QELA, QLEH…RTLA, and ALRS…SRLR.

This sequence belongs to the FBXL15 family. Part of the SCF (SKP1-CUL1-F-box) E3 ubiquitin-protein ligase complex SCF(FBXL15) composed of CUL1, SKP1, RBX1 and FBXL15.

The protein localises to the cytoplasm. It functions in the pathway protein modification; protein ubiquitination. Its function is as follows. Substrate recognition component of a SCF (SKP1-CUL1-F-box protein) E3 ubiquitin-protein ligase complex which mediates the ubiquitination and subsequent proteasomal degradation of SMURF1, thereby acting as a positive regulator of the BMP signaling pathway. Required for dorsal/ventral pattern formation. Also mediates ubiquitination of SMURF2 and WWP2. Required for bone mass maintenance. The chain is F-box/LRR-repeat protein 15 (Fbxl15) from Rattus norvegicus (Rat).